The chain runs to 634 residues: Chaperone protein HtpG (634 aa).

Positions 1–339 (MAQETMSFQA…SADLPLNVSR (339 aa)) are a; substrate-binding. A b region spans residues 340 to 559 (EILQESRDVK…DGEMSGYLQR (220 aa)). The c stretch occupies residues 560 to 634 (MLKAAGQQAP…ALLLARANEA (75 aa)).

Belongs to the heat shock protein 90 family. As to quaternary structure, homodimer.

The protein resides in the cytoplasm. In terms of biological role, molecular chaperone. Has ATPase activity. The polypeptide is Chaperone protein HtpG (Paraburkholderia xenovorans (strain LB400)).